Reading from the N-terminus, the 176-residue chain is Shikimate kinase (176 aa).

Residue 14-19 coordinates ATP; sequence GAGKST. Ser18 is a binding site for Mg(2+). Residues Asp36, Arg60, and Gly83 each coordinate substrate. An ATP-binding site is contributed by Arg121. Substrate is bound at residue Arg140.

This sequence belongs to the shikimate kinase family. Monomer. Mg(2+) is required as a cofactor.

It is found in the cytoplasm. It carries out the reaction shikimate + ATP = 3-phosphoshikimate + ADP + H(+). It functions in the pathway metabolic intermediate biosynthesis; chorismate biosynthesis; chorismate from D-erythrose 4-phosphate and phosphoenolpyruvate: step 5/7. In terms of biological role, catalyzes the specific phosphorylation of the 3-hydroxyl group of shikimic acid using ATP as a cosubstrate. This Francisella tularensis subsp. tularensis (strain FSC 198) protein is Shikimate kinase.